The primary structure comprises 185 residues: Large ribosomal subunit protein uL30 (185 aa).

This sequence belongs to the universal ribosomal protein uL30 family. As to quaternary structure, part of the 50S ribosomal subunit.

In Caldivirga maquilingensis (strain ATCC 700844 / DSM 13496 / JCM 10307 / IC-167), this protein is Large ribosomal subunit protein uL30.